Consider the following 455-residue polypeptide: 3-isopropylmalate dehydratase large subunit (455 aa).

Cys-336, Cys-396, and Cys-399 together coordinate [4Fe-4S] cluster.

It belongs to the aconitase/IPM isomerase family. LeuC type 1 subfamily. Heterodimer of LeuC and LeuD. The cofactor is [4Fe-4S] cluster.

It catalyses the reaction (2R,3S)-3-isopropylmalate = (2S)-2-isopropylmalate. It participates in amino-acid biosynthesis; L-leucine biosynthesis; L-leucine from 3-methyl-2-oxobutanoate: step 2/4. In terms of biological role, catalyzes the isomerization between 2-isopropylmalate and 3-isopropylmalate, via the formation of 2-isopropylmaleate. The protein is 3-isopropylmalate dehydratase large subunit of Staphylococcus aureus (strain MRSA252).